The chain runs to 455 residues: Bifunctional protein GlmU (455 aa).

The pyrophosphorylase stretch occupies residues 1–227 (MKLKAIILAA…YEEIMAVNSR (227 aa)). UDP-N-acetyl-alpha-D-glucosamine is bound by residues 8 to 11 (LAAG), lysine 22, glutamine 72, and 77 to 78 (GT). Aspartate 100 is a Mg(2+) binding site. UDP-N-acetyl-alpha-D-glucosamine is bound by residues glycine 137, glutamate 152, asparagine 167, and asparagine 225. Asparagine 225 is a binding site for Mg(2+). The linker stretch occupies residues 228–248 (EQLADVEAIMRRRIAKKHMAN). The tract at residues 249–455 (GVTIMNPEHV…WTKRKGLLKK (207 aa)) is N-acetyltransferase. Residues arginine 330 and lysine 348 each contribute to the UDP-N-acetyl-alpha-D-glucosamine site. Residue histidine 360 is the Proton acceptor of the active site. UDP-N-acetyl-alpha-D-glucosamine-binding residues include tyrosine 363 and asparagine 374. Acetyl-CoA is bound by residues 383–384 (NY), serine 402, cysteine 420, and arginine 437.

It in the N-terminal section; belongs to the N-acetylglucosamine-1-phosphate uridyltransferase family. This sequence in the C-terminal section; belongs to the transferase hexapeptide repeat family. In terms of assembly, homotrimer. The cofactor is Mg(2+).

It is found in the cytoplasm. The catalysed reaction is alpha-D-glucosamine 1-phosphate + acetyl-CoA = N-acetyl-alpha-D-glucosamine 1-phosphate + CoA + H(+). It catalyses the reaction N-acetyl-alpha-D-glucosamine 1-phosphate + UTP + H(+) = UDP-N-acetyl-alpha-D-glucosamine + diphosphate. It functions in the pathway nucleotide-sugar biosynthesis; UDP-N-acetyl-alpha-D-glucosamine biosynthesis; N-acetyl-alpha-D-glucosamine 1-phosphate from alpha-D-glucosamine 6-phosphate (route II): step 2/2. It participates in nucleotide-sugar biosynthesis; UDP-N-acetyl-alpha-D-glucosamine biosynthesis; UDP-N-acetyl-alpha-D-glucosamine from N-acetyl-alpha-D-glucosamine 1-phosphate: step 1/1. The protein operates within bacterial outer membrane biogenesis; LPS lipid A biosynthesis. In terms of biological role, catalyzes the last two sequential reactions in the de novo biosynthetic pathway for UDP-N-acetylglucosamine (UDP-GlcNAc). The C-terminal domain catalyzes the transfer of acetyl group from acetyl coenzyme A to glucosamine-1-phosphate (GlcN-1-P) to produce N-acetylglucosamine-1-phosphate (GlcNAc-1-P), which is converted into UDP-GlcNAc by the transfer of uridine 5-monophosphate (from uridine 5-triphosphate), a reaction catalyzed by the N-terminal domain. The polypeptide is Bifunctional protein GlmU (Alkaliphilus oremlandii (strain OhILAs) (Clostridium oremlandii (strain OhILAs))).